The primary structure comprises 781 residues: Dual specificity protein kinase zakA (781 aa).

Protein kinase domains lie at 9 to 317 (WEEI…HKLI) and 379 to 654 (DKDD…EIGL). Residues 15–23 (IGEGQYGRV) and lysine 44 contribute to the ATP site. Aspartate 132 acts as the Proton acceptor in catalysis. Positions 168-209 (ETTNNNNNPNNNNNNNNNNNNNNNNNNNNNNNNNNINNINNN) are disordered. Low complexity predominate over residues 171-209 (NNNNNPNNNNNNNNNNNNNNNNNNNNNNNNNNINNINNN). Residues 385–393 (GGAGNFGDV) and lysine 406 contribute to the ATP site. Aspartate 507 (proton acceptor) is an active-site residue.

This sequence in the N-terminal section; belongs to the protein kinase superfamily. Ser/Thr protein kinase family. It in the C-terminal section; belongs to the protein kinase superfamily. TKL Tyr protein kinase family. N-terminal serine/threonine domain is capable of autophosphorylation, in vitro, but to a lower extent than the tyrosine kinase domain. May function as a negative regulator of the tyrosine kinase domain. Post-translationally, C-terminal tyrosine kinase domain is capable of autophosphorylation, in vitro. ZakA and zak2 are coexpressed in prestalk cell population, zakA is enriched in pstB populations and zak1 in pstA populations. ZakA and zak2 are coexpressed in prespore cells, zakA expression levels are 10 fold higher than zak2.

The catalysed reaction is L-seryl-[protein] + ATP = O-phospho-L-seryl-[protein] + ADP + H(+). It carries out the reaction L-threonyl-[protein] + ATP = O-phospho-L-threonyl-[protein] + ADP + H(+). It catalyses the reaction L-tyrosyl-[protein] + ATP = O-phospho-L-tyrosyl-[protein] + ADP + H(+). Functionally, positive regulator of gsk3/gskA activity required for cell pattern formation and a downstream effector of carC. The kinases, gsk3/gskA, zakA and zak2, form part of a signaling pathway that responds to extracellular cyclic AMP. The pathway has a role in transcriptional regulation; required to direct prespore/spore fates during development. ZakA negatively regulates prestalk differentiation by regulating expression of ecmB. Phosphorylates Y-214 of gsk3/gskA, in vitro. In Dictyostelium discoideum (Social amoeba), this protein is Dual specificity protein kinase zakA (zakA).